The following is a 216-amino-acid chain: NADH dehydrogenase [ubiquinone] iron-sulfur protein 7, mitochondrial (216 aa).

Residues 1 to 37 (MAALAALRLLHPILAVRSGVGAALQVRGVHSSMAADS) constitute a mitochondrion transit peptide. [4Fe-4S] cluster is bound by residues Cys-91 and Cys-92. At Arg-114 the chain carries Hydroxyarginine. Residues Cys-156 and Cys-186 each contribute to the [4Fe-4S] cluster site.

The protein belongs to the complex I 20 kDa subunit family. In terms of assembly, core subunit of respiratory chain NADH dehydrogenase (Complex I) which is composed of 45 different subunits. This is a component of the iron-sulfur (IP) fragment of the enzyme. It depends on [4Fe-4S] cluster as a cofactor. Hydroxylated ar Arg-114 by NDUFAF5 early in the pathway of assembly of complex I, before the formation of the juncture between peripheral and membrane arms.

Its subcellular location is the mitochondrion inner membrane. The enzyme catalyses a ubiquinone + NADH + 5 H(+)(in) = a ubiquinol + NAD(+) + 4 H(+)(out). Functionally, core subunit of the mitochondrial membrane respiratory chain NADH dehydrogenase (Complex I) which catalyzes electron transfer from NADH through the respiratory chain, using ubiquinone as an electron acceptor. Essential for the catalytic activity of complex I. This chain is NADH dehydrogenase [ubiquinone] iron-sulfur protein 7, mitochondrial (NDUFS7), found in Bos taurus (Bovine).